We begin with the raw amino-acid sequence, 441 residues long: Dihydroorotase (441 aa).

2 residues coordinate Zn(2+): His77 and His79. Substrate contacts are provided by residues His79–Arg81 and Asn111. Asp167, His194, and His248 together coordinate Zn(2+). Asn294 lines the substrate pocket. Zn(2+) is bound at residue Asp321. The active site involves Asp321. Substrate is bound by residues His325 and Phe339 to Gly340.

This sequence belongs to the metallo-dependent hydrolases superfamily. DHOase family. Class I DHOase subfamily. Requires Zn(2+) as cofactor.

It catalyses the reaction (S)-dihydroorotate + H2O = N-carbamoyl-L-aspartate + H(+). Its pathway is pyrimidine metabolism; UMP biosynthesis via de novo pathway; (S)-dihydroorotate from bicarbonate: step 3/3. Functionally, catalyzes the reversible cyclization of carbamoyl aspartate to dihydroorotate. In Wolbachia sp. subsp. Drosophila simulans (strain wRi), this protein is Dihydroorotase.